The following is a 590-amino-acid chain: Probable metalloendopeptidase G1-type (590 aa).

Residue histidine 41 participates in Zn(2+) binding. Glutamate 44 is an active-site residue. Histidine 45 is a binding site for Zn(2+).

Belongs to the peptidase M44 family. Requires Zn(2+) as cofactor.

In terms of biological role, seems to be involved in viral proteins maturation by cleavage at Ala-Gly-|-Xaa motifs. The protein is Probable metalloendopeptidase G1-type of Homo sapiens (Human).